A 390-amino-acid polypeptide reads, in one-letter code: Succinyl-diaminopimelate desuccinylase 1 (390 aa).

Zn(2+) is bound at residue H76. D78 is an active-site residue. Residue D109 participates in Zn(2+) binding. E143 (proton acceptor) is an active-site residue. Zn(2+) is bound by residues E144, E172, and H363.

It belongs to the peptidase M20A family. DapE subfamily. In terms of assembly, homodimer. Zn(2+) is required as a cofactor. It depends on Co(2+) as a cofactor.

It carries out the reaction N-succinyl-(2S,6S)-2,6-diaminopimelate + H2O = (2S,6S)-2,6-diaminopimelate + succinate. It participates in amino-acid biosynthesis; L-lysine biosynthesis via DAP pathway; LL-2,6-diaminopimelate from (S)-tetrahydrodipicolinate (succinylase route): step 3/3. Functionally, catalyzes the hydrolysis of N-succinyl-L,L-diaminopimelic acid (SDAP), forming succinate and LL-2,6-diaminopimelate (DAP), an intermediate involved in the bacterial biosynthesis of lysine and meso-diaminopimelic acid, an essential component of bacterial cell walls. This Alteromonas mediterranea (strain DSM 17117 / CIP 110805 / LMG 28347 / Deep ecotype) protein is Succinyl-diaminopimelate desuccinylase 1.